The sequence spans 390 residues: MSYEKKAVHFGGGNIGRGFVAEFLHNSGYEVVFVDVMDSIIESLQKTKTYTVTEIGDDGERKFTIDHYRAINSKHEMDKVVQEIASADVVTCAVGPNILKFVAEPVAKAIEARTLDYPIAVIACENAINATTTWRGFIESKLSEETKKNIDSKARFANSAIDRIVPQQPPNGGLDVVIEKFHEWCVEQKPFENGGKKPDVKGIHYVDDLEPYIERKLFTVNTSHATAAYYGHQNKVQYIHEVLHDKKLHDTVRDAVKETAHLIVTKHGVETAEQDAYVEEIIKRISNPVLKDNVERVGRAPLRKLSRKERFIGPAAQLAERGEKVDALLGAVEQAYRFQNVEGDEESVELAKILKENSAEEVVTKVNGIEKGQPLFDRLVAIVKKVQGGS.

An NAD(+)-binding site is contributed by 7-18 (AVHFGGGNIGRG). The active site involves lysine 216.

This sequence belongs to the mannitol dehydrogenase family. In terms of assembly, monomer.

The enzyme catalyses D-mannitol 1-phosphate + NAD(+) = beta-D-fructose 6-phosphate + NADH + H(+). Functionally, catalyzes the NAD(H)-dependent interconversion of D-fructose 6-phosphate and D-mannitol 1-phosphate in the mannitol metabolic pathway. Has a strong preference for NADH over NADPH. The sequence is that of Mannitol-1-phosphate 5-dehydrogenase from Alternaria alternata (Alternaria rot fungus).